A 184-amino-acid polypeptide reads, in one-letter code: Acetyl-CoA decarbonylase/synthase complex subunit epsilon 1 (184 aa).

The protein belongs to the CdhB family. Heterotetramer of two alpha and two epsilon subunits. The ACDS complex is made up of alpha, epsilon, beta, gamma and delta subunits with a probable stoichiometry of (alpha(2)epsilon(2))(4)-beta(8)-(gamma(1)delta(1))(8).

In terms of biological role, part of a complex that catalyzes the reversible cleavage of acetyl-CoA, allowing autotrophic growth from CO(2). The alpha-epsilon subcomponent functions as a carbon monoxide dehydrogenase. The precise role of the epsilon subunit is unclear; it may have a stabilizing role within the alpha(2)epsilon(2) component and/or be involved in electron transfer to FAD during a potential FAD-mediated CO oxidation. The chain is Acetyl-CoA decarbonylase/synthase complex subunit epsilon 1 (cdhB1) from Archaeoglobus fulgidus (strain ATCC 49558 / DSM 4304 / JCM 9628 / NBRC 100126 / VC-16).